The sequence spans 128 residues: Probable 4-amino-4-deoxy-L-arabinose-phosphoundecaprenol flippase subunit ArnF (128 aa).

The Cytoplasmic portion of the chain corresponds to 1-2 (MG). A helical transmembrane segment spans residues 3 to 23 (LMWGLFSVIIASVAQLSLGFA). Residues 24–35 (ASHLPPMTHLWD) lie on the Periplasmic side of the membrane. Residues 36-56 (FIAALLAFGLDARILLLGLLG) traverse the membrane as a helical segment. Over 57 to 76 (YLLSVFCWYKTLHKLALSKA) the chain is Cytoplasmic. The chain crosses the membrane as a helical span at residues 77-97 (YALLSMSYVLVWIASMVLPGW). Residues 98 to 100 (EGT) are Periplasmic-facing. The chain crosses the membrane as a helical span at residues 101–121 (FSLKALLGVACIMSGLMLIFL). Residues 122–128 (PTTKQRY) are Cytoplasmic-facing.

The protein belongs to the ArnF family. Heterodimer of ArnE and ArnF.

The protein resides in the cell inner membrane. It functions in the pathway bacterial outer membrane biogenesis; lipopolysaccharide biosynthesis. Functionally, translocates 4-amino-4-deoxy-L-arabinose-phosphoundecaprenol (alpha-L-Ara4N-phosphoundecaprenol) from the cytoplasmic to the periplasmic side of the inner membrane. The sequence is that of Probable 4-amino-4-deoxy-L-arabinose-phosphoundecaprenol flippase subunit ArnF from Shigella sonnei (strain Ss046).